The primary structure comprises 433 residues: GTPase Der (433 aa).

2 consecutive EngA-type G domains span residues 3–167 and 175–349; these read KIVS…DKNI and PRIA…FNLR. Residues 9 to 16, 56 to 60, 119 to 122, 181 to 188, 228 to 232, and 293 to 296 contribute to the GTP site; these read GRPNVGKS, DTGGY, NKID, DTAGI, and NKWD. Positions 350 to 433 constitute a KH-like domain; the sequence is LRIKTSLLNK…IPIKILFRLK (84 aa).

It belongs to the TRAFAC class TrmE-Era-EngA-EngB-Septin-like GTPase superfamily. EngA (Der) GTPase family. Associates with the 50S ribosomal subunit.

GTPase that plays an essential role in the late steps of ribosome biogenesis. The protein is GTPase Der of Karelsulcia muelleri (strain GWSS) (Sulcia muelleri).